A 267-amino-acid polypeptide reads, in one-letter code: Phosphate import ATP-binding protein PstB 1 (267 aa).

Residues 21–262 (LETKDLHVYY…AALQSTSDYV (242 aa)) form the ABC transporter domain. ATP is bound at residue 53 to 60 (GPSGCGKS).

The protein belongs to the ABC transporter superfamily. Phosphate importer (TC 3.A.1.7) family. In terms of assembly, the complex is composed of two ATP-binding proteins (PstB), two transmembrane proteins (PstC and PstA) and a solute-binding protein (PstS).

The protein localises to the cell membrane. The enzyme catalyses phosphate(out) + ATP + H2O = ADP + 2 phosphate(in) + H(+). Part of the ABC transporter complex PstSACB involved in phosphate import. Responsible for energy coupling to the transport system. The sequence is that of Phosphate import ATP-binding protein PstB 1 from Streptococcus thermophilus (strain CNRZ 1066).